The following is a 262-amino-acid chain: Flap endonuclease Xni (262 aa).

Residue aspartate 105 participates in Mg(2+) binding. A 5'-3' exonuclease domain is found at 162 to 257 (ERSQFLDLMA…FRVIDSPPEK (96 aa)). Positions 172, 173, 181, 183, and 186 each coordinate K(+). The interval 185-190 (GIGPKS) is interaction with DNA.

This sequence belongs to the Xni family. The cofactor is Mg(2+). K(+) is required as a cofactor.

Has flap endonuclease activity. During DNA replication, flap endonucleases cleave the 5'-overhanging flap structure that is generated by displacement synthesis when DNA polymerase encounters the 5'-end of a downstream Okazaki fragment. The chain is Flap endonuclease Xni from Shewanella baltica (strain OS155 / ATCC BAA-1091).